The sequence spans 155 residues: UPF0735 ACT domain-containing protein CA_C1234 (155 aa).

The ACT domain occupies 79-154 (TISILIEHRR…NVLKVEIVAM (76 aa)).

It belongs to the UPF0735 family.

The chain is UPF0735 ACT domain-containing protein CA_C1234 from Clostridium acetobutylicum (strain ATCC 824 / DSM 792 / JCM 1419 / IAM 19013 / LMG 5710 / NBRC 13948 / NRRL B-527 / VKM B-1787 / 2291 / W).